The sequence spans 339 residues: Phenylalanine--tRNA ligase alpha subunit (339 aa).

Glu-250 serves as a coordination point for Mg(2+).

The protein belongs to the class-II aminoacyl-tRNA synthetase family. Phe-tRNA synthetase alpha subunit type 1 subfamily. As to quaternary structure, tetramer of two alpha and two beta subunits. It depends on Mg(2+) as a cofactor.

The protein localises to the cytoplasm. The catalysed reaction is tRNA(Phe) + L-phenylalanine + ATP = L-phenylalanyl-tRNA(Phe) + AMP + diphosphate + H(+). This is Phenylalanine--tRNA ligase alpha subunit from Bacteroides fragilis (strain ATCC 25285 / DSM 2151 / CCUG 4856 / JCM 11019 / LMG 10263 / NCTC 9343 / Onslow / VPI 2553 / EN-2).